A 272-amino-acid chain; its full sequence is DNA repair protein RecO (272 aa).

Belongs to the RecO family.

Its function is as follows. Involved in DNA repair and RecF pathway recombination. The sequence is that of DNA repair protein RecO from Limosilactobacillus fermentum (strain NBRC 3956 / LMG 18251) (Lactobacillus fermentum).